A 54-amino-acid polypeptide reads, in one-letter code: Putative ankyrin repeat protein RC0701 (54 aa).

An ANK repeat occupies 17 to 46 (SGKTPLDWYSDYNATKIVETLIKNGGNVSS).

The polypeptide is Putative ankyrin repeat protein RC0701 (Rickettsia conorii (strain ATCC VR-613 / Malish 7)).